The primary structure comprises 346 residues: Histidinol-phosphate aminotransferase (346 aa).

Residue K209 is modified to N6-(pyridoxal phosphate)lysine.

The protein belongs to the class-II pyridoxal-phosphate-dependent aminotransferase family. Histidinol-phosphate aminotransferase subfamily. In terms of assembly, homodimer. Pyridoxal 5'-phosphate is required as a cofactor.

It carries out the reaction L-histidinol phosphate + 2-oxoglutarate = 3-(imidazol-4-yl)-2-oxopropyl phosphate + L-glutamate. It participates in amino-acid biosynthesis; L-histidine biosynthesis; L-histidine from 5-phospho-alpha-D-ribose 1-diphosphate: step 7/9. The sequence is that of Histidinol-phosphate aminotransferase from Vibrio vulnificus (strain CMCP6).